A 336-amino-acid chain; its full sequence is UDP-glucose 4-epimerase (336 aa).

Residues 11–12 (YI), 31–36 (DNLINS), 58–59 (DI), 80–84 (FAGLK), N99, S124, Y149, K153, and F178 each bind NAD(+). Substrate-binding residues include S124 and Y149. The active-site Proton acceptor is the Y149. Residues N179, 199-200 (NL), 216-218 (LVY), R231, and 290-293 (RPGD) each bind substrate.

Belongs to the NAD(P)-dependent epimerase/dehydratase family. As to quaternary structure, homodimer. The cofactor is NAD(+).

The enzyme catalyses UDP-alpha-D-glucose = UDP-alpha-D-galactose. It participates in carbohydrate metabolism; galactose metabolism. Functionally, involved in the metabolism of galactose. Catalyzes the conversion of UDP-galactose (UDP-Gal) to UDP-glucose (UDP-Glc) through a mechanism involving the transient reduction of NAD. This chain is UDP-glucose 4-epimerase (galE), found in Yersinia enterocolitica.